The chain runs to 251 residues: CDP-diacylglycerol pyrophosphatase (251 aa).

Residues Ala-4–Trp-24 traverse the membrane as a helical segment.

The protein belongs to the Cdh family.

The protein localises to the cell inner membrane. The catalysed reaction is a CDP-1,2-diacyl-sn-glycerol + H2O = a 1,2-diacyl-sn-glycero-3-phosphate + CMP + 2 H(+). The protein operates within phospholipid metabolism; CDP-diacylglycerol degradation; phosphatidate from CDP-diacylglycerol: step 1/1. The protein is CDP-diacylglycerol pyrophosphatase of Escherichia coli O81 (strain ED1a).